The chain runs to 134 residues: MGKDTIADIITSIRNADMNRKRTVQIPFTNITENTVKILLREGFIENVRKHRESDKSFLVLTLRYRRNTKGSYKTFLNLKRISTPGLRIYYNYQKIPRILGGMGIVILSTSRGIMTDREARLEKIGGEVLCYIW.

Belongs to the universal ribosomal protein uS8 family. As to quaternary structure, part of the 30S ribosomal subunit.

Its subcellular location is the plastid. The protein localises to the chloroplast. In terms of biological role, one of the primary rRNA binding proteins, it binds directly to 16S rRNA central domain where it helps coordinate assembly of the platform of the 30S subunit. The chain is Small ribosomal subunit protein uS8c (rps8) from Lotus japonicus (Lotus corniculatus var. japonicus).